A 556-amino-acid chain; its full sequence is 2-succinyl-5-enolpyruvyl-6-hydroxy-3-cyclohexene-1-carboxylate synthase (556 aa).

The protein belongs to the TPP enzyme family. MenD subfamily. In terms of assembly, homodimer. It depends on Mg(2+) as a cofactor. Requires Mn(2+) as cofactor. Thiamine diphosphate is required as a cofactor.

The enzyme catalyses isochorismate + 2-oxoglutarate + H(+) = 5-enolpyruvoyl-6-hydroxy-2-succinyl-cyclohex-3-ene-1-carboxylate + CO2. Its pathway is quinol/quinone metabolism; 1,4-dihydroxy-2-naphthoate biosynthesis; 1,4-dihydroxy-2-naphthoate from chorismate: step 2/7. It functions in the pathway quinol/quinone metabolism; menaquinone biosynthesis. Its function is as follows. Catalyzes the thiamine diphosphate-dependent decarboxylation of 2-oxoglutarate and the subsequent addition of the resulting succinic semialdehyde-thiamine pyrophosphate anion to isochorismate to yield 2-succinyl-5-enolpyruvyl-6-hydroxy-3-cyclohexene-1-carboxylate (SEPHCHC). The chain is 2-succinyl-5-enolpyruvyl-6-hydroxy-3-cyclohexene-1-carboxylate synthase from Escherichia coli O17:K52:H18 (strain UMN026 / ExPEC).